The primary structure comprises 652 residues: Sodium-dependent phosphate transporter 2 (652 aa).

Over 1 to 5 (MAMDE) the chain is Extracellular. The chain crosses the membrane as a helical span at residues 6–26 (YLWMVILGFIIAFILAFSVGA). Over 27–46 (NDVANSFGTAVGSGVVTLRQ) the chain is Cytoplasmic. A helical transmembrane segment spans residues 47 to 67 (ACILASIFETTGSVLLGAKVG). Topologically, residues 68–86 (ETIRKGIIDVNLYNETVET) are extracellular. N-linked (GlcNAc...) asparagine glycosylation is present at Asn-81. Residues 87-107 (LMAGEVSAMVGSAVWQLIASF) traverse the membrane as a helical segment. Topologically, residues 108–109 (LR) are cytoplasmic. The helical transmembrane segment at 110-130 (LPISGTHCIVGSTIGFSLVAI) threads the bilayer. Residues 131 to 142 (GTKGVQWMELVK) are Extracellular-facing. The helical transmembrane segment at 143 to 163 (IVASWFISPLLSGFMSGLLFV) threads the bilayer. Over 164–190 (LIRIFILKKEDPVPNGLRALPVFYAAT) the chain is Cytoplasmic. Residues 191-211 (IAINVFSIMYTGAPVLGLVLP) traverse the membrane as a helical segment. Residues 212–213 (MW) lie on the Extracellular side of the membrane. Residues 214–234 (AIALISFGVALLFAFFVWLFV) traverse the membrane as a helical segment. Over 235–482 (CPWMRRKITG…EEKEEKDAPE (248 aa)) the chain is Cytoplasmic. Phosphoserine is present on residues Ser-253, Ser-256, Ser-259, and Ser-268. The segment at 273 to 307 (ELPGAKANDDSTIPLTGAAGETLGTSEGTSAGSHP) is disordered. The span at 295 to 304 (LGTSEGTSAG) shows a compositional bias: polar residues. Phosphoserine is present on residues Ser-316 and Ser-385. The disordered stretch occupies residues 458 to 477 (SELADPDQPREDPAEEEKEE). Residues 483–503 (VHLLFHFLQVLTACFGSFAHG) traverse the membrane as a helical segment. Topologically, residues 504-530 (GNDVSNAIGPLVALWLIYKQGGVTQEA) are extracellular. Residues 531–551 (ATPVWLLFYGGVGICTGLWVW) form a helical membrane-spanning segment. Topologically, residues 552–571 (GRRVIQTMGKDLTPITPSSG) are cytoplasmic. A helical membrane pass occupies residues 572–586 (FTIELASAFTVVIAS). Residues 587–593 (NIGLPVS) are Extracellular-facing. Residues 594–609 (TTHCKVGSVVAVGWIR) traverse the membrane as a helical segment. The Cytoplasmic segment spans residues 610–621 (SRKAVDWRLFRN). The chain crosses the membrane as a helical span at residues 622–642 (IFVAWFVTVPVAGLFSAAVMA). Residues 643-652 (LLMYGILPYV) lie on the Extracellular side of the membrane.

The protein belongs to the inorganic phosphate transporter (PiT) (TC 2.A.20) family. As to quaternary structure, homodimer. As to expression, ubiquitously expressed.

It localises to the cell membrane. Its subcellular location is the apical cell membrane. The enzyme catalyses 2 Na(+)(out) + phosphate(out) = 2 Na(+)(in) + phosphate(in). Sodium-phosphate symporter which preferentially transports the monovalent form of phosphate with a stoichiometry of two sodium ions per phosphate ion. Plays a critical role in the determination of bone quality and strength by providing phosphate for bone mineralization. Required to maintain normal cerebrospinal fluid phosphate levels. Mediates phosphate-induced calcification of vascular smooth muscle cells (VCMCs) and can functionally compensate for loss of SLC20A1 in VCMCs. Functionally, (Microbial infection) Functions as a retroviral receptor and confers human cells susceptibility to infection to amphotropic murine leukemia virus (A-MuLV), 10A1 murine leukemia virus (10A1 MLV) and some feline leukemia virus subgroup B (FeLV-B) variants. This is Sodium-dependent phosphate transporter 2 (SLC20A2) from Homo sapiens (Human).